The following is a 399-amino-acid chain: Acetate kinase (399 aa).

Asn7 provides a ligand contact to Mg(2+). Lys14 is a binding site for ATP. Arg90 contacts substrate. Residue Asp147 is the Proton donor/acceptor of the active site. ATP contacts are provided by residues 207–211 (HLGNG), 282–284 (DFR), and 330–334 (GIGEN). Residue Glu385 coordinates Mg(2+).

It belongs to the acetokinase family. Homodimer. It depends on Mg(2+) as a cofactor. Requires Mn(2+) as cofactor.

Its subcellular location is the cytoplasm. It carries out the reaction acetate + ATP = acetyl phosphate + ADP. The protein operates within metabolic intermediate biosynthesis; acetyl-CoA biosynthesis; acetyl-CoA from acetate: step 1/2. Functionally, catalyzes the formation of acetyl phosphate from acetate and ATP. Can also catalyze the reverse reaction. This Caldicellulosiruptor saccharolyticus (strain ATCC 43494 / DSM 8903 / Tp8T 6331) protein is Acetate kinase.